A 219-amino-acid polypeptide reads, in one-letter code: Lipid A acyltransferase PagP (219 aa).

A signal peptide spans 1–28 (MRLILISHSRLFALSALFLIPTFDSLSA). The segment at 39–63 (IDRTTQSDSTTQRDSKTRRDPAPSF) is disordered. Residues 49–59 (TQRDSKTRRDP) are compositionally biased toward basic and acidic residues. Residues His91, Asp134, and Ser135 contribute to the active site.

Belongs to the lipid A palmitoyltransferase family. As to quaternary structure, homodimer.

Its subcellular location is the cell outer membrane. The catalysed reaction is a lipid A + a 1,2-diacyl-sn-glycero-3-phosphocholine = a hepta-acyl lipid A + a 2-acyl-sn-glycero-3-phosphocholine. It carries out the reaction a lipid IVA + a 1,2-diacyl-sn-glycero-3-phosphocholine = a lipid IVB + a 2-acyl-sn-glycero-3-phosphocholine. It catalyses the reaction a lipid IIA + a 1,2-diacyl-sn-glycero-3-phosphocholine = a lipid IIB + a 2-acyl-sn-glycero-3-phosphocholine. Its function is as follows. Transfers a fatty acid residue from the sn-1 position of a phospholipid to the N-linked hydroxyfatty acid chain on the proximal unit of lipid A or its precursors. The chain is Lipid A acyltransferase PagP from Dickeya zeae (strain Ech586) (Dickeya dadantii (strain Ech586)).